The primary structure comprises 181 residues: Transcription termination/antitermination protein NusG (181 aa).

Residues 130–161 form the KOW domain; the sequence is PGEMVRVNDGPFADFNGVVEEVDYEKSRLKVS.

This sequence belongs to the NusG family. Monomer. Interacts with the transcription termination factor Rho and with RNA polymerase.

Participates in transcription elongation, termination and antitermination. In the absence of Rho, increases the rate of transcription elongation by the RNA polymerase (RNAP), probably by partially suppressing pausing. In the presence of Rho, modulates most Rho-dependent termination events by interacting with the RNAP to render the complex more susceptible to the termination activity of Rho. May be required to overcome a kinetic limitation of Rho to function at certain terminators. Also involved in ribosomal RNA transcriptional antitermination. The chain is Transcription termination/antitermination protein NusG from Salmonella typhi.